We begin with the raw amino-acid sequence, 310 residues long: Protoheme IX farnesyltransferase (310 aa).

9 helical membrane-spanning segments follow: residues 37-57 (LITV…DVLL), 64-84 (LTLL…CYLN), 113-133 (ILAL…IVNH), 134-154 (VAAV…TMWL), 159-181 (TINT…AAVT), 186-208 (IDAW…ALAM), 215-237 (RAAG…QIVW), 257-277 (MLVM…GLKI), and 290-310 (MFFF…LVSL).

The protein belongs to the UbiA prenyltransferase family. Protoheme IX farnesyltransferase subfamily. As to quaternary structure, interacts with CtaA.

Its subcellular location is the cell membrane. The catalysed reaction is heme b + (2E,6E)-farnesyl diphosphate + H2O = Fe(II)-heme o + diphosphate. It functions in the pathway porphyrin-containing compound metabolism; heme O biosynthesis; heme O from protoheme: step 1/1. Converts heme B (protoheme IX) to heme O by substitution of the vinyl group on carbon 2 of heme B porphyrin ring with a hydroxyethyl farnesyl side group. This chain is Protoheme IX farnesyltransferase, found in Exiguobacterium sibiricum (strain DSM 17290 / CCUG 55495 / CIP 109462 / JCM 13490 / 255-15).